The chain runs to 382 residues: Gap junction alpha-1 protein (382 aa).

Residues 2-23 (GDWSALGKLLDKVQAYSTAGGK) lie on the Cytoplasmic side of the membrane. The residue at position 5 (Ser5) is a Phosphoserine. Residues 24–44 (VWLSVLFIFRILLLGTAVESA) traverse the membrane as a helical segment. At 45 to 76 (WGDEQSAFRCNTQQPGCENVCYDKSFPISHVR) the chain is on the extracellular side. Disulfide bonds link Cys54–Cys192 and Cys187–Cys198. A helical membrane pass occupies residues 77-97 (FWVLQIIFVSVPTLLYLAHVF). The Cytoplasmic portion of the chain corresponds to 98-155 (YVMRKEEKLNKKEEELKVAQTDGVNVEMHLKQIEIKKFKYGIEEHGKVKMRGGLLRTY). A Glycyl lysine isopeptide (Lys-Gly) (interchain with G-Cter in SUMO) cross-link involves residue Lys144. Residues 156 to 176 (IISILFKSIFEVAFLLIQWYI) form a helical membrane-spanning segment. At 177 to 207 (YGFSLSAVYTCKRDPCPHQVDCFLSRPTEKT) the chain is on the extracellular side. A helical membrane pass occupies residues 208–228 (IFIIFMLVVSLVSLALNIIEL). The Cytoplasmic segment spans residues 229–382 (FYVFFKGVKD…SRPRPDDLEI (154 aa)). Lys237 is covalently cross-linked (Glycyl lysine isopeptide (Lys-Gly) (interchain with G-Cter in SUMO)). Positions 244–382 (SDPYHATSGA…SRPRPDDLEI (139 aa)) are interaction with NOV. Phosphotyrosine is present on Tyr247. Ser255 and Ser262 each carry phosphoserine. The tract at residues 264–382 (KYAYFNGCSS…SRPRPDDLEI (119 aa)) is interaction with UBQLN4. Cys271 carries the post-translational modification S-nitrosocysteine. Residue Thr275 is modified to Phosphothreonine. Positions 279-300 (SPMSPPGYKPVTGDRNNSSCRN) are disordered. A phosphoserine mark is found at Ser306 and Ser314. Polar residues predominate over residues 317 to 332 (QNRMGQAGSTISNSHA). Residues 317–382 (QNRMGQAGST…SRPRPDDLEI (66 aa)) form a disordered region. Ser325 carries the phosphoserine; by CK1 modification. Thr326 bears the Phosphothreonine mark. Ser328 and Ser330 each carry phosphoserine; by CK1. Phosphoserine is present on residues Ser344 and Ser365. Over residues 362–374 (RPSSRASSRASSR) the composition is skewed to low complexity. At Ser368 the chain carries Phosphoserine; by PKC/PRKCG and PKC/PRKCD. Residues Ser369 and Ser373 each carry the phosphoserine modification.

This sequence belongs to the connexin family. Alpha-type (group II) subfamily. As to quaternary structure, a connexon is composed of a hexamer of connexins. Interacts with SGSM3. Interacts with RIC1/CIP150. Interacts with CNST and CSNK1D. Interacts (via C-terminus) with TJP1. Interacts (via C-terminus) with SRC (via SH3 domain). Interacts (not ubiquitinated) with UBQLN4 (via UBA domain). Interacts with NOV. Interacts with TMEM65. Interacts with ANK3/ANKG and PKP2. Post-translationally, phosphorylation at Ser-325, Ser-328 and Ser-330 by CK1 modulates gap junction assembly. Phosphorylated at Ser-368 by PRKCG; phosphorylation induces disassembly of gap junction plaques and inhibition of gap junction activity. Phosphorylation at Ser-368 by PRKCD triggers its internalization into small vesicles leading to proteasome-mediated degradation. In terms of processing, sumoylated with SUMO1, SUMO2 and SUMO3, which may regulate the level of functional Cx43 gap junctions at the plasma membrane. May be desumoylated by SENP1 or SENP2. S-nitrosylation at Cys-271 is enriched at the muscle endothelial gap junction in arteries, it augments channel permeability and may regulate of smooth muscle cell to endothelial cell communication. Post-translationally, acetylated in the developing cortex; leading to delocalization from the cell membrane.

It is found in the cell membrane. Its subcellular location is the cell junction. It localises to the gap junction. The protein resides in the endoplasmic reticulum. Functionally, gap junction protein that acts as a regulator of bladder capacity. A gap junction consists of a cluster of closely packed pairs of transmembrane channels, the connexons, through which materials of low MW diffuse from one cell to a neighboring cell. May play a critical role in the physiology of hearing by participating in the recycling of potassium to the cochlear endolymph. Negative regulator of bladder functional capacity: acts by enhancing intercellular electrical and chemical transmission, thus sensitizing bladder muscles to cholinergic neural stimuli and causing them to contract. May play a role in cell growth inhibition through the regulation of NOV expression and localization. Plays an essential role in gap junction communication in the ventricles. The sequence is that of Gap junction alpha-1 protein (GJA1) from Macaca fascicularis (Crab-eating macaque).